A 307-amino-acid polypeptide reads, in one-letter code: N-acetylglucosaminyl-diphospho-decaprenol L-rhamnosyltransferase (307 aa).

It belongs to the glycosyltransferase 2 family. The cofactor is Mn(2+). Requires Mg(2+) as cofactor.

It catalyses the reaction N-acetyl-alpha-D-glucosaminyl-1-diphospho-trans,octa-cis-decaprenol + dTDP-beta-L-rhamnose = alpha-L-rhamnosyl-(1-&gt;3)-N-acetyl-alpha-D-glucosaminyl-diphospho-trans,octa-cis-decaprenol + dTDP + H(+). Functionally, involved in the biosynthesis of the mycolylarabinogalactan-peptidoglycan (mAGP) complex, an essential component of the mycobacterial cell wall. Catalyzes the transfer of the rhamnosyl moiety from dTDP-rhamnosyl (dTDP-Rha) onto the decaprenyl-pyrophosphoryl-GlcNAc (C50-PP-GlcNAc), yielding rhamnosyl-decaprenyl-pyrophosphoryl-GlcNAc (Rha-C50-PP-GlcNAc). The polypeptide is N-acetylglucosaminyl-diphospho-decaprenol L-rhamnosyltransferase (wbbL) (Mycobacterium tuberculosis (strain CDC 1551 / Oshkosh)).